The following is a 554-amino-acid chain: (E)-nerolidol synthase TPS18VF (554 aa).

Residues arginine 276, aspartate 313, aspartate 317, arginine 455, and aspartate 458 each contribute to the (2E,6E)-farnesyl diphosphate site. Aspartate 313 and aspartate 317 together coordinate Mg(2+). The DDXXD motif signature appears at 313-317 (DDIFD). Mg(2+) is bound by residues aspartate 458, serine 462, and glutamate 466.

Belongs to the terpene synthase family. Tpsb subfamily. It depends on Mg(2+) as a cofactor. Requires Mn(2+) as cofactor. Highly expressed in glandular trichomes.

The catalysed reaction is (2E,6E)-farnesyl diphosphate + H2O = (6E)-nerolidol + diphosphate. It catalyses the reaction (2E)-geranyl diphosphate + H2O = (S)-linalool + diphosphate. It functions in the pathway secondary metabolite biosynthesis; terpenoid biosynthesis. In terms of biological role, involved in sesquiterpene olefins biosynthesis, constituants of cannabinoids and terpenoids-rich resins. Catalyzes primarily the conversion of (2E)-farnesyl diphosphate to (E)-nerolidol, and the conversion of (2E)-geranyl diphosphate to (+)linalool. This is (E)-nerolidol synthase TPS18VF from Cannabis sativa (Hemp).